The primary structure comprises 68 residues: ATP synthase F(0) complex subunit 8 (68 aa).

Residues 8–24 (TWLITILSMILTLLIVF) traverse the membrane as a helical segment. Lysine 54 carries the post-translational modification N6-acetyllysine; alternate. Lysine 54 is modified (N6-succinyllysine; alternate). At lysine 57 the chain carries N6-acetyllysine.

The protein belongs to the ATPase protein 8 family. Component of the ATP synthase complex composed at least of ATP5F1A/subunit alpha, ATP5F1B/subunit beta, ATP5MC1/subunit c (homooctomer), MT-ATP6/subunit a, MT-ATP8/subunit 8, ATP5ME/subunit e, ATP5MF/subunit f, ATP5MG/subunit g, ATP5MK/subunit k, ATP5MJ/subunit j, ATP5F1C/subunit gamma, ATP5F1D/subunit delta, ATP5F1E/subunit epsilon, ATP5PF/subunit F6, ATP5PB/subunit b, ATP5PD/subunit d, ATP5PO/subunit OSCP. ATP synthase complex consists of a soluble F(1) head domain (subunits alpha(3) and beta(3)) - the catalytic core - and a membrane F(0) domain - the membrane proton channel (subunits c, a, 8, e, f, g, k and j). These two domains are linked by a central stalk (subunits gamma, delta, and epsilon) rotating inside the F1 region and a stationary peripheral stalk (subunits F6, b, d, and OSCP). Interacts with PRICKLE3.

The protein localises to the mitochondrion membrane. In terms of biological role, subunit 8, of the mitochondrial membrane ATP synthase complex (F(1)F(0) ATP synthase or Complex V) that produces ATP from ADP in the presence of a proton gradient across the membrane which is generated by electron transport complexes of the respiratory chain. ATP synthase complex consist of a soluble F(1) head domain - the catalytic core - and a membrane F(1) domain - the membrane proton channel. These two domains are linked by a central stalk rotating inside the F(1) region and a stationary peripheral stalk. During catalysis, ATP synthesis in the catalytic domain of F(1) is coupled via a rotary mechanism of the central stalk subunits to proton translocation. In vivo, can only synthesize ATP although its ATP hydrolase activity can be activated artificially in vitro. Part of the complex F(0) domain. The polypeptide is ATP synthase F(0) complex subunit 8 (Lemur catta (Ring-tailed lemur)).